The chain runs to 107 residues: U1-lycotoxin-Ls1h (107 aa).

Positions 1–20 (MMKVLVVVALLVTLISYSSS) are cleaved as a signal peptide. Positions 21–41 (EGIDDLEADELLSLMANEQTR) are excised as a propeptide. 3 disulfide bridges follow: Cys44-Cys59, Cys51-Cys68, and Cys70-Cys84.

The protein belongs to the neurotoxin 19 (CSTX) family. 04 (U1-Lctx) subfamily. As to expression, expressed by the venom gland.

The protein localises to the secreted. The chain is U1-lycotoxin-Ls1h from Lycosa singoriensis (Wolf spider).